The primary structure comprises 463 residues: Asparagine--tRNA ligase (463 aa).

It belongs to the class-II aminoacyl-tRNA synthetase family. As to quaternary structure, homodimer.

Its subcellular location is the cytoplasm. It catalyses the reaction tRNA(Asn) + L-asparagine + ATP = L-asparaginyl-tRNA(Asn) + AMP + diphosphate + H(+). This Clostridium botulinum (strain Langeland / NCTC 10281 / Type F) protein is Asparagine--tRNA ligase.